The following is a 389-amino-acid chain: Succinate--CoA ligase [ADP-forming] subunit beta (389 aa).

An ATP-grasp domain is found at 9 to 236 (RDMFEAHGVP…KDAADPLEAK (228 aa)). ATP is bound by residues Lys-45, 52–54 (GRG), Ala-94, and Glu-99. The Mg(2+) site is built by Asn-191 and Asp-205. Substrate is bound by residues Asn-256 and 318 to 320 (GIT).

The protein belongs to the succinate/malate CoA ligase beta subunit family. In terms of assembly, heterotetramer of two alpha and two beta subunits. The cofactor is Mg(2+).

It carries out the reaction succinate + ATP + CoA = succinyl-CoA + ADP + phosphate. It catalyses the reaction GTP + succinate + CoA = succinyl-CoA + GDP + phosphate. Its pathway is carbohydrate metabolism; tricarboxylic acid cycle; succinate from succinyl-CoA (ligase route): step 1/1. In terms of biological role, succinyl-CoA synthetase functions in the citric acid cycle (TCA), coupling the hydrolysis of succinyl-CoA to the synthesis of either ATP or GTP and thus represents the only step of substrate-level phosphorylation in the TCA. The beta subunit provides nucleotide specificity of the enzyme and binds the substrate succinate, while the binding sites for coenzyme A and phosphate are found in the alpha subunit. This Pseudarthrobacter chlorophenolicus (strain ATCC 700700 / DSM 12829 / CIP 107037 / JCM 12360 / KCTC 9906 / NCIMB 13794 / A6) (Arthrobacter chlorophenolicus) protein is Succinate--CoA ligase [ADP-forming] subunit beta.